A 468-amino-acid polypeptide reads, in one-letter code: Nuclear receptor ROR-alpha A (468 aa).

The nuclear receptor DNA-binding region spans 15–90; that stretch reads IIPCKICGDK…VGMSRDAVKF (76 aa). NR C4-type zinc fingers lie at residues 18 to 38 and 54 to 73; these read CKIC…CEGC and CPRQ…CQHC. Disordered regions lie at residues 101-129 and 142-163; these read LYAE…PLTP and HDDL…DSGV. In terms of domain architecture, NR LBD spans 217–455; it reads ELEHLAQNIS…AHFPPLYKEL (239 aa). The AF-2 stretch occupies residues 444-455; that stretch reads VRAHFPPLYKEL.

It belongs to the nuclear hormone receptor family. NR1 subfamily. As to expression, expressed in the brain, in cerebellar-like structures, including Purkinje cells.

Its subcellular location is the nucleus. In terms of biological role, nuclear receptor that binds DNA as a monomer to ROR response elements (RORE). Required for proper cerebellum development. The sequence is that of Nuclear receptor ROR-alpha A (roraa) from Danio rerio (Zebrafish).